The sequence spans 254 residues: Tyrosine-protein phosphatase YwqE (254 aa).

Belongs to the metallo-dependent hydrolases superfamily. CpsB/CapC family. The cofactor is Mn(2+).

It catalyses the reaction O-phospho-L-tyrosyl-[protein] + H2O = L-tyrosyl-[protein] + phosphate. Its activity is regulated as follows. Inhibited by vanadate and sodium pyrophosphate. Not inhibited by sodium fluoride. In terms of biological role, dephosphorylates the phosphotyrosine-containing proteins YwqD, YwqF and Ssb. This Bacillus subtilis (strain 168) protein is Tyrosine-protein phosphatase YwqE (ywqE).